Reading from the N-terminus, the 215-residue chain is 3-isopropylmalate dehydratase small subunit (215 aa).

The protein belongs to the LeuD family. LeuD type 1 subfamily. In terms of assembly, heterodimer of LeuC and LeuD.

It catalyses the reaction (2R,3S)-3-isopropylmalate = (2S)-2-isopropylmalate. The protein operates within amino-acid biosynthesis; L-leucine biosynthesis; L-leucine from 3-methyl-2-oxobutanoate: step 2/4. Functionally, catalyzes the isomerization between 2-isopropylmalate and 3-isopropylmalate, via the formation of 2-isopropylmaleate. The polypeptide is 3-isopropylmalate dehydratase small subunit (Marinobacter nauticus (strain ATCC 700491 / DSM 11845 / VT8) (Marinobacter aquaeolei)).